We begin with the raw amino-acid sequence, 278 residues long: Elongation factor Ts (278 aa).

An involved in Mg(2+) ion dislocation from EF-Tu region spans residues T79–V82.

The protein belongs to the EF-Ts family.

The protein resides in the cytoplasm. Associates with the EF-Tu.GDP complex and induces the exchange of GDP to GTP. It remains bound to the aminoacyl-tRNA.EF-Tu.GTP complex up to the GTP hydrolysis stage on the ribosome. This Borrelia duttonii (strain Ly) protein is Elongation factor Ts.